Reading from the N-terminus, the 361-residue chain is Chorismate synthase (361 aa).

Residues Arg48 and Arg54 each contribute to the NADP(+) site. FMN is bound by residues Arg125–Ser127, Asn240–Ala241, Gly286, Lys301–Ser305, and Arg327.

The protein belongs to the chorismate synthase family. As to quaternary structure, homotetramer. FMNH2 is required as a cofactor.

It carries out the reaction 5-O-(1-carboxyvinyl)-3-phosphoshikimate = chorismate + phosphate. It functions in the pathway metabolic intermediate biosynthesis; chorismate biosynthesis; chorismate from D-erythrose 4-phosphate and phosphoenolpyruvate: step 7/7. In terms of biological role, catalyzes the anti-1,4-elimination of the C-3 phosphate and the C-6 proR hydrogen from 5-enolpyruvylshikimate-3-phosphate (EPSP) to yield chorismate, which is the branch point compound that serves as the starting substrate for the three terminal pathways of aromatic amino acid biosynthesis. This reaction introduces a second double bond into the aromatic ring system. This chain is Chorismate synthase, found in Magnetococcus marinus (strain ATCC BAA-1437 / JCM 17883 / MC-1).